A 144-amino-acid polypeptide reads, in one-letter code: Large ribosomal subunit protein uL15 (144 aa).

The interval 1–52 (MIKLESLQDPSPRKRRKKLLGRGPGSGHGKTSGRGHKGDGSRSGYKRRFGYE) is disordered. Over residues 22-32 (RGPGSGHGKTS) the composition is skewed to gly residues.

Belongs to the universal ribosomal protein uL15 family. Part of the 50S ribosomal subunit.

Functionally, binds to the 23S rRNA. In Chlamydia felis (strain Fe/C-56) (Chlamydophila felis), this protein is Large ribosomal subunit protein uL15.